The following is a 1232-amino-acid chain: Histone-lysine N-methyltransferase MECOM (1232 aa).

The segment at 22–68 (PEIPLEEMPDADADGITSVPSLHIQEPCSPATSSESFTPKEGSPYKA) is disordered. Acidic residues predominate over residues 25-34 (PLEEMPDADA). The region spanning 80 to 192 (DEFELRESTM…PGEELLLFMK (113 aa)) is the SET domain. Glycyl lysine isopeptide (Lys-Gly) (interchain with G-Cter in SUMO2) cross-links involve residues Lys101 and Lys192. The tract at residues 191–442 (MKSEEDPHEP…NHFAAGGFFG (252 aa)) is interaction with SUV39H1 and probably MAPK9 and SMAD3. C2H2-type zinc fingers lie at residues 211–238 (HRCE…STPH), 265–287 (QDCK…MLSH), 293–315 (YKCD…QMSH), 321–344 (YECE…RSQH), and 350–372 (HACP…KHIH). A Glycyl lysine isopeptide (Lys-Gly) (interchain with G-Cter in SUMO2) cross-link involves residue Lys294. Glycyl lysine isopeptide (Lys-Gly) (interchain with G-Cter in SUMO2) cross-links involve residues Lys369 and Lys376. The C2H2-type 6 zinc finger occupies 378–400 (FICEVCHKSYTQFSNLCRHKRMH). The segment at 407–429 (IKCKDCGQMFSTTSSLNKHRRFC) adopts a C2H2-type 7; atypical zinc-finger fold. Residues Lys432, Lys525, Lys545, Lys549, and Lys557 each participate in a glycyl lysine isopeptide (Lys-Gly) (interchain with G-Cter in SUMO2) cross-link. A disordered region spans residues 548-622 (SKHPPVGDNK…KCKENGKMFK (75 aa)). The segment covering 562–577 (LPERSSEERPLEKISD) has biased composition (basic and acidic residues). Residues 588-600 (STPSGSDLETTSG) are compositionally biased toward polar residues. Over residues 608 to 622 (ESDKEKCKENGKMFK) the composition is skewed to basic and acidic residues. A Nuclear localization signal motif is present at residues 611–624 (KEKCKENGKMFKDK). Lys624 is covalently cross-linked (Glycyl lysine isopeptide (Lys-Gly) (interchain with G-Cter in SUMO2)). Ser626 is subject to Phosphoserine. Glycyl lysine isopeptide (Lys-Gly) (interchain with G-Cter in SUMO2) cross-links involve residues Lys637, Lys665, Lys687, and Lys723. The tract at residues 720–823 (LPLKMEPQSP…DGSLQHARPT (104 aa)) is disordered. Position 728 is a phosphoserine (Ser728). Residues Lys733, Lys734, and Lys737 each participate in a glycyl lysine isopeptide (Lys-Gly) (interchain with G-Cter in SUMO2) cross-link. Ser742 carries the phosphoserine modification. The short motif at 743–747 (PFDLT) is the CTBP-binding motif 1 element. Residues Lys751, Lys754, and Lys762 each participate in a glycyl lysine isopeptide (Lys-Gly) (interchain with G-Cter in SUMO2) cross-link. The span at 758–773 (SGPSKPSGTPATSQDQ) shows a compositional bias: polar residues. Residues 774-778 (PLDLS) carry the CTBP-binding motif 2 motif. Glycyl lysine isopeptide (Lys-Gly) (interchain with G-Cter in SUMO2) cross-links involve residues Lys789, Lys802, and Lys803. The segment covering 791–805 (TEPRKNHVFGEKKGS) has biased composition (basic and acidic residues). Over residues 806 to 816 (NMDTRPSSDGS) the composition is skewed to polar residues. Residues Lys837, Lys846, Lys848, and Lys879 each participate in a glycyl lysine isopeptide (Lys-Gly) (interchain with G-Cter in SUMO2) cross-link. 3 consecutive C2H2-type zinc fingers follow at residues 914–936 (YTCR…LRTH), 942–965 (YRCK…RNIH), and 971–993 (FKCH…LKKH). Residue Lys1020 forms a Glycyl lysine isopeptide (Lys-Gly) (interchain with G-Cter in SUMO2) linkage. Polar residues predominate over residues 1032 to 1043 (IGNSNHGSQSPR). Residues 1032–1107 (IGNSNHGSQS…GVTRLDEEIP (76 aa)) form a disordered region. Residues Ser1039 and Ser1041 each carry the phosphoserine modification. Residues 1044-1059 (NMEERMNGSHFKDKKA) show a composition bias toward basic and acidic residues. Glycyl lysine isopeptide (Lys-Gly) (interchain with G-Cter in SUMO2) cross-links involve residues Lys1055 and Lys1058. A compositionally biased stretch (acidic residues) spans 1068 to 1088 (LLDDEEVEDEVLLDEEDEDND). Residues 1089–1104 (IPGKPRKELGVTRLDE) are compositionally biased toward basic and acidic residues. Residues Lys1122, Lys1129, Lys1134, Lys1151, Lys1178, and Lys1186 each participate in a glycyl lysine isopeptide (Lys-Gly) (interchain with G-Cter in SUMO2) cross-link.

As to quaternary structure, homooligomer. Interacts with CTBP1. Interacts with SMAD3 (via MH2 domain); the interaction is direct. Interacts with SMAD4; through interaction with SMAD3. Interacts with CREBBP, KAT2B and histone deacetylases. Interacts with MAPK8 and MAPK9; inhibits JNK signaling. Interacts with SUV39H1 (via SET domain); enhances MECOM transcriptional repression activity. Post-translationally, may be acetylated by CREBBP and KAT2B.

The protein resides in the nucleus. It is found in the nucleus speckle. It localises to the cytoplasm. The catalysed reaction is L-lysyl(9)-[histone H3] + S-adenosyl-L-methionine = N(6)-methyl-L-lysyl(9)-[histone H3] + S-adenosyl-L-homocysteine + H(+). Functionally, functions as a transcriptional regulator binding to DNA sequences in the promoter region of target genes and regulating positively or negatively their expression. Oncogene which plays a role in development, cell proliferation and differentiation. May also play a role in apoptosis through regulation of the JNK and TGF-beta signaling. Involved in hematopoiesis. Its function is as follows. Displays histone methyltransferase activity and monomethylates 'Lys-9' of histone H3 (H3K9me1) in vitro. Probably catalyzes the monomethylation of free histone H3 in the cytoplasm which is then transported to the nucleus and incorporated into nucleosomes where SUV39H methyltransferases use it as a substrate to catalyze histone H3 'Lys-9' trimethylation. Likely to be one of the primary histone methyltransferases along with PRDM16 that direct cytoplasmic H3K9me1 methylation. The protein is Histone-lysine N-methyltransferase MECOM of Mus musculus (Mouse).